We begin with the raw amino-acid sequence, 534 residues long: UDP-glucuronosyltransferase 1A4 (534 aa).

The signal sequence occupies residues 1 to 28 (MARGLQVPLPRLATGLLLLLSVQPWAES). Asn119, Asn142, Asn296, and Asn348 each carry an N-linked (GlcNAc...) asparagine glycan. The helical transmembrane segment at 492–508 (VIGFLLAVVLTVAFITF) threads the bilayer.

This sequence belongs to the UDP-glycosyltransferase family. As to quaternary structure, homodimer. Homooligomer. Interacts with UGT1A1, UGT1A3, UGT1A6, UGT1A7, UGT1A8, UGT1A9 and UGT1A10 to form heterodimers. Isoform 1 interacts with isoform 2/i2 suggesting that oligomerization is involved in negative regulation of transferase activity by isoform 2. Isoform 1 also interacts with respective i2 isoforms of UGT1A1, UGT1A3, UGT1A6, UGT1A7, UGT1A8, UGT1A9 and UGT1A10. Expressed in liver. Expressed in kidney, colon and small intestine. Not expressed in esophagus. Not expressed in skin. In terms of tissue distribution, expressed in liver, kidney, colon, esophagus and small intestine.

The protein localises to the endoplasmic reticulum membrane. The catalysed reaction is glucuronate acceptor + UDP-alpha-D-glucuronate = acceptor beta-D-glucuronoside + UDP + H(+). It carries out the reaction calcidiol + UDP-alpha-D-glucuronate = calcidiol 25-O-(beta-D-glucuronide) + UDP + H(+). The enzyme catalyses calcidiol + UDP-alpha-D-glucuronate = calcidiol 3-O-(beta-D-glucuronide) + UDP + H(+). It catalyses the reaction calcitriol + UDP-alpha-D-glucuronate = calcitriol 25-O-(beta-D-glucuronide) + UDP + H(+). The catalysed reaction is (5Z,8Z,11Z,14Z)-eicosatetraenoate + UDP-alpha-D-glucuronate = O-[(5Z),(8Z),(11Z),(14Z)-eicosatetraenoyl]-beta-D-glucuronate + UDP. It carries out the reaction 15-hydroxy-(5Z,8Z,11Z,13E)-eicosatetraenoate + UDP-alpha-D-glucuronate = 15-O-(beta-D-glucuronosyl)-(5Z,8Z,11Z,14Z)-eicosatetraenoate + UDP + H(+). The enzyme catalyses 20-hydroxy-(5Z,8Z,11Z,14Z)-eicosatetraenoate + UDP-alpha-D-glucuronate = 20-O-(beta-D-glucuronosyl)-(5Z,8Z,11Z,14Z)-eicosatetraenoate + UDP + H(+). UDP-glucuronosyltransferase (UGT) that catalyzes phase II biotransformation reactions in which lipophilic substrates are conjugated with glucuronic acid to increase the metabolite's water solubility, thereby facilitating excretion into either the urine or bile. Essential for the elimination and detoxification of drugs, xenobiotics and endogenous compounds. Involved in the glucuronidation of calcidiol, which is the major circulating form of vitamin D3 essential for the regulation of calcium and phosphate homeostasis. Also glucuronidates the biologically active form of vitamin D3, calcitriol, probably leading to its biliary transport and intestinal reabsorption. Involved in the glucuronidation of arachidonic acid (AA) and AA-derived eicosanoids including 15-HETE, 20-HETE and PGB1. Functionally, lacks UDP-glucuronosyltransferase (UGT) activity but acts as a negative regulator of isoform 1. In Homo sapiens (Human), this protein is UDP-glucuronosyltransferase 1A4.